A 206-amino-acid chain; its full sequence is CASP-like protein 2C1 (206 aa).

The Cytoplasmic portion of the chain corresponds to 1–31 (MSVLGVGPRTVTPHLRKGMMESSSGISLARA). A helical membrane pass occupies residues 32–52 (EAFLRLFAILVLVLTACLLGF). Topologically, residues 53–71 (DTQTKLLFSTIKKTATFRD) are extracellular. The helical transmembrane segment at 72 to 92 (LGALQVVVYVDSVAAGYNLLQ) threads the bilayer. The Cytoplasmic segment spans residues 93–111 (LGRGFISAKLKGKLINVSY). The chain crosses the membrane as a helical span at residues 112 to 132 (VTLPWVCFLLDQAAVYTVFSA). Residues 133–161 (NTAALQASIIAVTGESSLQWMKVCNRYTR) are Extracellular-facing. A helical transmembrane segment spans residues 162 to 182 (FCIQVGGALLSGYLASLLMVL). Over 183–206 (LSSLSAFSLFRLYSPKQFHLLKPT) the chain is Cytoplasmic.

This sequence belongs to the Casparian strip membrane proteins (CASP) family. As to quaternary structure, homodimer and heterodimers.

The protein localises to the cell membrane. In Vitis vinifera (Grape), this protein is CASP-like protein 2C1.